The chain runs to 352 residues: tRNA pseudouridine synthase D (352 aa).

The Nucleophile role is filled by Asp81. Residues 157-303 enclose the TRUD domain; it reads GVPNYFGGQR…MSHERRILRL (147 aa).

This sequence belongs to the pseudouridine synthase TruD family.

The enzyme catalyses uridine(13) in tRNA = pseudouridine(13) in tRNA. Responsible for synthesis of pseudouridine from uracil-13 in transfer RNAs. This chain is tRNA pseudouridine synthase D, found in Pseudomonas putida (strain W619).